The primary structure comprises 131 residues: Superoxide dismutase [Ni] (131 aa).

A propeptide spanning residues 1–14 (MLSRLFAPKVKVSA) is cleaved from the precursor. His15, Cys16, and Cys20 together coordinate Ni(2+).

It belongs to the nickel superoxide dismutase family. Homohexamer. The hexameric protein has roughly the shape of a hollow sphere with an outer diameter of 72 Angstroms and a large inner cavity. Ni(2+) serves as cofactor.

The protein localises to the cytoplasm. It catalyses the reaction 2 superoxide + 2 H(+) = H2O2 + O2. The polypeptide is Superoxide dismutase [Ni] (sodN) (Streptomyces seoulensis).